The chain runs to 448 residues: Putative F-box/LRR-repeat protein At5g25860 (448 aa).

Residues 11 to 58 (RDAVNCLPDEILAKILSYLPTKRAVSTSLISKRWRNLFALMIQLFESQ) form the F-box domain. LRR repeat units lie at residues 82-106 (QESF…SILC), 185-214 (FLHA…FLHD), 215-240 (LRGY…TVHF), 310-341 (TLSL…YFES), and 342-367 (NEKE…VLKG).

The chain is Putative F-box/LRR-repeat protein At5g25860 from Arabidopsis thaliana (Mouse-ear cress).